A 207-amino-acid polypeptide reads, in one-letter code: Large ribosomal subunit protein uL4 (207 aa).

The disordered stretch occupies residues 44-85; that stretch reads MRQGTHKTKNRAEVSGGGRKPWRQKGTGRARQGSIRSPQWRG.

This sequence belongs to the universal ribosomal protein uL4 family. In terms of assembly, part of the 50S ribosomal subunit.

One of the primary rRNA binding proteins, this protein initially binds near the 5'-end of the 23S rRNA. It is important during the early stages of 50S assembly. It makes multiple contacts with different domains of the 23S rRNA in the assembled 50S subunit and ribosome. Its function is as follows. Forms part of the polypeptide exit tunnel. The protein is Large ribosomal subunit protein uL4 of Geobacillus thermodenitrificans (strain NG80-2).